The chain runs to 6995 residues: Fibrous sheath-interacting protein 2 (6995 aa).

Disordered regions lie at residues 273 to 292, 308 to 336, and 351 to 476; these read EQKI…RKKQ, DTGL…SSKK, and GDQK…TDAP. Over residues 359-396 the composition is skewed to polar residues; the sequence is TSGQVSATVNQSQSSSKDVTKVSASSVTYPAEVQNSSS. A compositionally biased stretch (basic and acidic residues) spans 397–421; that stretch reads EQKRSEVTKRLSDERGKNSTDDSAR. Polar residues predominate over residues 424-442; the sequence is IISTQLSPTRNAKLSQISL. A Phosphoserine modification is found at S430. A compositionally biased stretch (basic and acidic residues) spans 443–452; sequence DHQKEEKEMK. A compositionally biased stretch (polar residues) spans 453–463; that stretch reads STWNGGLSKKS. Residues 665–692 are a coiled coil; that stretch reads LEISLLYDKKAKAMDQIKNLKNVFVNFK. Disordered regions lie at residues 1452-1472, 2554-2595, 2699-2731, 3182-3270, 5489-5665, 5719-5740, 5823-5878, 5943-5996, and 6973-6995; these read PDPQ…DPPT, KSKR…VPQM, TKTK…TPQV, PVKM…PNFT, GPSA…KYKG, SKSS…MTEK, KDLS…SKSK, KEDE…PDKL, and SKVF…QDKR. Positions 2555 to 2565 are enriched in basic and acidic residues; the sequence is SKREGEMHDSS. Over residues 3187–3204 the composition is skewed to polar residues; the sequence is PSNTSDTPRTRRSSQGSV. Residues 3220 to 3231 show a composition bias toward low complexity; the sequence is SVTSNSSSHISS. Over residues 3232 to 3250 the composition is skewed to polar residues; the sequence is CVENTNKSLEPMGRSNSEA. Residues 3255–3265 are compositionally biased toward basic residues; that stretch reads SRHKAHDHGQR. A compositionally biased stretch (basic and acidic residues) spans 5496–5509; sequence DAKKEDESKVKPAT. Composition is skewed to polar residues over residues 5523 to 5557, 5565 to 5625, and 5638 to 5650; these read MKSQ…SPPT, QVQQ…QSAM, and VQES…TTMK. 2 stretches are compositionally biased toward basic and acidic residues: residues 5719–5738 and 5829–5877; these read SKSS…ETMT and GHRD…ESKS. Residues 5982–5993 show a composition bias toward polar residues; sequence SDVQKTPEQSSP. A compositionally biased stretch (low complexity) spans 6977–6995; sequence SRSSGSIPKSSSPPHQDKR.

As to quaternary structure, may interact with AKAP4. In terms of tissue distribution, predominantly expressed in testis.

In terms of biological role, plays a role in spermatogenesis. This chain is Fibrous sheath-interacting protein 2 (Fsip2), found in Mus musculus (Mouse).